The primary structure comprises 425 residues: 2-oxoglutarate and iron-dependent oxygenase JMJD4 (425 aa).

The 160-residue stretch at 141–300 folds into the JmjC domain; the sequence is SRAFPEQDVY…IMWCFLQDEL (160 aa). His188, Asp190, and His268 together coordinate Fe cation.

This sequence belongs to the JMJD6 family. Fe(2+) serves as cofactor.

It is found in the cytoplasm. It carries out the reaction L-lysyl-[protein] + 2-oxoglutarate + O2 = 4-hydroxy-L-lysyl-[protein] + succinate + CO2. Catalyzes the 2-oxoglutarate and iron-dependent C4-lysyl hydroxylation of ETF1 at 'Lys-63' thereby promoting the translational termination efficiency of ETF1. This is 2-oxoglutarate and iron-dependent oxygenase JMJD4 (JMJD4) from Gallus gallus (Chicken).